The chain runs to 157 residues: 3-dehydroquinate dehydratase (157 aa).

The Proton acceptor role is filled by tyrosine 22. Residues asparagine 73, histidine 79, and aspartate 86 each coordinate substrate. Residue histidine 99 is the Proton donor of the active site. Residues 100 to 101 (LS) and arginine 110 each bind substrate.

This sequence belongs to the type-II 3-dehydroquinase family. Homododecamer.

It carries out the reaction 3-dehydroquinate = 3-dehydroshikimate + H2O. The protein operates within metabolic intermediate biosynthesis; chorismate biosynthesis; chorismate from D-erythrose 4-phosphate and phosphoenolpyruvate: step 3/7. Its function is as follows. Catalyzes a trans-dehydration via an enolate intermediate. The polypeptide is 3-dehydroquinate dehydratase (Roseiflexus castenholzii (strain DSM 13941 / HLO8)).